A 79-amino-acid chain; its full sequence is Small ribosomal subunit protein uS17 (79 aa).

This sequence belongs to the universal ribosomal protein uS17 family. Part of the 30S ribosomal subunit.

One of the primary rRNA binding proteins, it binds specifically to the 5'-end of 16S ribosomal RNA. In Caulobacter vibrioides (strain NA1000 / CB15N) (Caulobacter crescentus), this protein is Small ribosomal subunit protein uS17.